The primary structure comprises 299 residues: ATP phosphoribosyltransferase (299 aa).

It belongs to the ATP phosphoribosyltransferase family. Long subfamily. Equilibrium between an active dimeric form, an inactive hexameric form and higher aggregates. Interconversion between the various forms is largely reversible and is influenced by the natural substrates and inhibitors of the enzyme. Requires Mg(2+) as cofactor.

The protein resides in the cytoplasm. It carries out the reaction 1-(5-phospho-beta-D-ribosyl)-ATP + diphosphate = 5-phospho-alpha-D-ribose 1-diphosphate + ATP. It functions in the pathway amino-acid biosynthesis; L-histidine biosynthesis; L-histidine from 5-phospho-alpha-D-ribose 1-diphosphate: step 1/9. Its activity is regulated as follows. Feedback inhibited by histidine. In terms of biological role, catalyzes the condensation of ATP and 5-phosphoribose 1-diphosphate to form N'-(5'-phosphoribosyl)-ATP (PR-ATP). Has a crucial role in the pathway because the rate of histidine biosynthesis seems to be controlled primarily by regulation of HisG enzymatic activity. The sequence is that of ATP phosphoribosyltransferase from Serratia proteamaculans (strain 568).